The sequence spans 293 residues: Probable endonuclease 4 (293 aa).

Zn(2+) is bound by residues H78, H118, E154, D188, H191, H225, D238, H240, and E270.

It belongs to the AP endonuclease 2 family. Requires Zn(2+) as cofactor.

It catalyses the reaction Endonucleolytic cleavage to 5'-phosphooligonucleotide end-products.. Functionally, endonuclease IV plays a role in DNA repair. It cleaves phosphodiester bonds at apurinic or apyrimidinic (AP) sites, generating a 3'-hydroxyl group and a 5'-terminal sugar phosphate. The polypeptide is Probable endonuclease 4 (Vibrio vulnificus (strain CMCP6)).